A 127-amino-acid chain; its full sequence is MPLFGSTFSPKKTPPRKSASLSNLHNLDRSTREVELGLDYGTPTMNLAGQSLKFENGQWIAETGISGGVDRREAQRLRRRNQQLEEENNLLRLKVDILLDMLSETTAESHLMEKELDELKSVSRRRK.

Over residues 1 to 10 (MPLFGSTFSP) the composition is skewed to polar residues. The segment at 1-26 (MPLFGSTFSPKKTPPRKSASLSNLHN) is disordered. Residues serine 9 and serine 20 each carry the phosphoserine modification. Positions 60-112 (IAETGISGGVDRREAQRLRRRNQQLEEENNLLRLKVDILLDMLSETTAESHLM) are minimal region for the interaction with PKD2. The stretch at 68 to 125 (GVDRREAQRLRRRNQQLEEENNLLRLKVDILLDMLSETTAESHLMEKELDELKSVSRR) forms a coiled coil. Residues 77–98 (LRRRNQQLEEENNLLRLKVDIL) form a leucine-zipper; mediates homodimerization region.

It belongs to the chibby family. Homodimer. Homodimerization is essential for nuclear localization and interaction with KPNA4 but is dispensable for interaction with CTNNB1. Interacts with polycystin-2/PKD2 and GM130. Interacts with the C-terminal region of CTNNB1. Interacts (C-terminus) with TCIM (C-terminus), TCIM competes with CTNNB1 for the interaction with CBY1. Interacts with FAM92A; this interaction facilitates targeting of FAM92A to cilium basal body. Interacts with CIBAR2. Interacts with KPNA4.

The protein localises to the nucleus speckle. It localises to the cytoplasm. The protein resides in the cytoskeleton. Its subcellular location is the cilium basal body. It is found in the microtubule organizing center. The protein localises to the centrosome. It localises to the centriole. The protein resides in the golgi apparatus. Its subcellular location is the trans-Golgi network. It is found in the cell projection. The protein localises to the cilium. It localises to the flagellum. The protein resides in the nucleus. Functionally, inhibits the Wnt/Wingless pathway by binding to CTNNB1/beta-catenin and inhibiting beta-catenin-mediated transcriptional activation through competition with TCF/LEF transcription factors. Has also been shown to play a role in regulating the intracellular trafficking of polycystin-2/PKD2 and possibly of other intracellular proteins. Promotes adipocyte and cardiomyocyte differentiation. The protein is Protein chibby homolog 1 (CBY1) of Bos taurus (Bovine).